A 78-amino-acid chain; its full sequence is MSTIEERVKKIIVEQLGVKEDEVKNSASFVEDLGADSLDTVELVMALEEEFDTEIPDEEAEKITTVQAAIDFINANQQ.

The region spanning 2–77 (STIEERVKKI…AAIDFINANQ (76 aa)) is the Carrier domain. Ser37 is subject to O-(pantetheine 4'-phosphoryl)serine.

The protein belongs to the acyl carrier protein (ACP) family. 4'-phosphopantetheine is transferred from CoA to a specific serine of apo-ACP by AcpS. This modification is essential for activity because fatty acids are bound in thioester linkage to the sulfhydryl of the prosthetic group.

Its subcellular location is the cytoplasm. Its pathway is lipid metabolism; fatty acid biosynthesis. Its function is as follows. Carrier of the growing fatty acid chain in fatty acid biosynthesis. This chain is Acyl carrier protein, found in Yersinia pseudotuberculosis serotype O:1b (strain IP 31758).